The sequence spans 201 residues: MTTFVPDAKTWADTAYTAQSESVATAEELQSIATLWEGIGIPAANFFDVAFQLAMRCSDGHASSLTVLSGNCTVAPTVTLKAAAGLVKAVLPLRQFCRYYAKFVWNWRLSHDLPPANWADSQFPAEARFAAFDFFDGVTNSAAPQPPDGLIRPPTELELSAAQTAKFAALARVRGSGFVTTAAEITHGRAEVSRTMLLSPP.

Belongs to the potexvirus capsid protein family.

Its subcellular location is the virion. Its function is as follows. Required for genome encapsidation. Forms ribonucleoprotein complexes along with TGB1 helicase and viral RNA. This Lilium formosanum protein is Coat protein.